Reading from the N-terminus, the 222-residue chain is Superoxide dismutase [Mn], mitochondrial (222 aa).

Residues 1-24 (MLCRAACSAGRRLGPAASTAGSRH) constitute a mitochondrion transit peptide. Residue histidine 50 participates in Mn(2+) binding. Tyrosine 58 carries the 3'-nitrotyrosine modification. N6-acetyllysine; alternate occurs at positions 68 and 75. 2 positions are modified to N6-succinyllysine; alternate: lysine 68 and lysine 75. Mn(2+) is bound at residue histidine 98. Lysine 114 carries the N6-acetyllysine modification. Lysine 122 and lysine 130 each carry N6-acetyllysine; alternate. 2 positions are modified to N6-succinyllysine; alternate: lysine 122 and lysine 130. Mn(2+) contacts are provided by aspartate 183 and histidine 187. Position 202 is an N6-acetyllysine (lysine 202).

The protein belongs to the iron/manganese superoxide dismutase family. Homotetramer. Mn(2+) serves as cofactor. Nitrated under oxidative stress. Nitration coupled with oxidation inhibits the catalytic activity. Post-translationally, acetylation at Lys-122 decreases enzymatic activity. Deacetylated by SIRT3 upon exposure to ionizing radiations or after long fasting. In terms of processing, polyubiquitinated; leading to proteasomal degradation. Deubiquitinated by USP36 which increases protein stability.

It is found in the mitochondrion matrix. The catalysed reaction is 2 superoxide + 2 H(+) = H2O2 + O2. Its function is as follows. Destroys superoxide anion radicals which are normally produced within the cells and which are toxic to biological systems. The chain is Superoxide dismutase [Mn], mitochondrial (Sod2) from Rattus norvegicus (Rat).